The primary structure comprises 198 residues: tRNA (pseudouridine(54)-N(1))-methyltransferase (198 aa).

Residue leucine 128 coordinates S-adenosyl-L-methionine.

Belongs to the methyltransferase superfamily. TrmY family. Homodimer.

It is found in the cytoplasm. The catalysed reaction is pseudouridine(54) in tRNA + S-adenosyl-L-methionine = N(1)-methylpseudouridine(54) in tRNA + S-adenosyl-L-homocysteine + H(+). Functionally, specifically catalyzes the N1-methylation of pseudouridine at position 54 (Psi54) in tRNAs. In Haloarcula marismortui (strain ATCC 43049 / DSM 3752 / JCM 8966 / VKM B-1809) (Halobacterium marismortui), this protein is tRNA (pseudouridine(54)-N(1))-methyltransferase.